The primary structure comprises 93 residues: DNA-directed RNA polymerase subunit Rpo11 (93 aa).

This sequence belongs to the archaeal Rpo11/eukaryotic RPB11/RPC19 RNA polymerase subunit family. As to quaternary structure, part of the RNA polymerase complex.

It is found in the cytoplasm. It carries out the reaction RNA(n) + a ribonucleoside 5'-triphosphate = RNA(n+1) + diphosphate. Its function is as follows. DNA-dependent RNA polymerase (RNAP) catalyzes the transcription of DNA into RNA using the four ribonucleoside triphosphates as substrates. In Sulfurisphaera tokodaii (strain DSM 16993 / JCM 10545 / NBRC 100140 / 7) (Sulfolobus tokodaii), this protein is DNA-directed RNA polymerase subunit Rpo11.